The chain runs to 703 residues: Polyribonucleotide nucleotidyltransferase (703 aa).

The Mg(2+) site is built by aspartate 484 and aspartate 490. One can recognise a KH domain in the interval 551–610 (PQMIRMQIDPDKIREVIGPGGKTIHKIVDETGCKIDIEDDGSLFIMATDEEAAKKARFFV). The region spanning 620–694 (GKTYMGTVKR…RQGRVNLSRK (75 aa)) is the S1 motif domain.

Belongs to the polyribonucleotide nucleotidyltransferase family. The cofactor is Mg(2+).

It is found in the cytoplasm. The enzyme catalyses RNA(n+1) + phosphate = RNA(n) + a ribonucleoside 5'-diphosphate. Functionally, involved in mRNA degradation. Catalyzes the phosphorolysis of single-stranded polyribonucleotides processively in the 3'- to 5'-direction. This chain is Polyribonucleotide nucleotidyltransferase, found in Syntrophomonas wolfei subsp. wolfei (strain DSM 2245B / Goettingen).